The chain runs to 409 residues: Probable tRNA N6-adenosine threonylcarbamoyltransferase, mitochondrial (409 aa).

Residues 1–31 (MHALRNFAGNGIANVFGCGIRRRLSYVLGIE) constitute a mitochondrion transit peptide. His-135 and His-139 together coordinate a divalent metal cation. Substrate-binding positions include 159 to 163 (LASGG), Asp-192, Gly-212, Glu-216, 322 to 323 (NN), and Ser-350. Residue Asp-351 coordinates a divalent metal cation.

It belongs to the KAE1 / TsaD family. In terms of assembly, homodimer. The cofactor is a divalent metal cation.

Its subcellular location is the mitochondrion. It carries out the reaction L-threonylcarbamoyladenylate + adenosine(37) in tRNA = N(6)-L-threonylcarbamoyladenosine(37) in tRNA + AMP + H(+). Its function is as follows. Required for the formation of a threonylcarbamoyl group on adenosine at position 37 (t(6)A37) in mitochondrial tRNAs that read codons beginning with adenine. Probably involved in the transfer of the threonylcarbamoyl moiety of threonylcarbamoyl-AMP (TC-AMP) to the N6 group of A37. Involved in mitochondrial genome maintenance. This Drosophila melanogaster (Fruit fly) protein is Probable tRNA N6-adenosine threonylcarbamoyltransferase, mitochondrial.